A 192-amino-acid polypeptide reads, in one-letter code: Hydrophobin-like protein rodD (192 aa).

Intrachain disulfides connect Cys-45/Cys-106, Cys-50/Cys-99, and Cys-107/Cys-112.

The protein belongs to the fungal hydrophobin family. Self-assembles to form functional amyloid fibrils called rodlets. Self-assembly into fibrillar rodlets occurs spontaneously at hydrophobic:hydrophilic interfaces and the rodlets further associate laterally to form amphipathic monolayers.

Functionally, aerial growth, conidiation, and dispersal of filamentous fungi in the environment rely upon a capability of their secreting small amphipathic proteins called hydrophobins (HPBs) with low sequence identity. Class I can self-assemble into an outermost layer of rodlet bundles on aerial cell surfaces, conferring cellular hydrophobicity that supports fungal growth, development and dispersal; whereas Class II form highly ordered films at water-air interfaces through intermolecular interactions but contribute nothing to the rodlet structure. RodD is a an hydrophobin-like protein that, unlike rodA, is not required for rodlet formation. The chain is Hydrophobin-like protein rodD from Aspergillus fumigatus (strain ATCC MYA-4609 / CBS 101355 / FGSC A1100 / Af293) (Neosartorya fumigata).